The following is a 315-amino-acid chain: Trimethylguanosine synthase (315 aa).

Residues Met1–Arg58 form a required for correct nucleolar localization region. Residue Asp126 coordinates S-adenosyl-L-methionine. The tract at residues Thr271–Gly315 is disordered. The span at Asn273–Leu284 shows a compositional bias: basic and acidic residues.

The protein belongs to the methyltransferase superfamily. Trimethylguanosine synthase family. In terms of assembly, monomer. Interacts with the spliceosomal snRNP core component SMB1 and the snoRNP components CBF5 and NOP58.

The protein localises to the nucleus. The protein resides in the nucleolus. It catalyses the reaction a 5'-end (N(7)-methyl 5'-triphosphoguanosine)-ribonucleoside in snRNA + S-adenosyl-L-methionine = a 5'-end (N(2),N(7)-dimethyl 5'-triphosphoguanosine)-ribonucleoside in snRNA + S-adenosyl-L-homocysteine + H(+). It carries out the reaction a 5'-end (N(7)-methyl 5'-triphosphoguanosine)-ribonucleoside in snoRNA + S-adenosyl-L-methionine = a 5'-end (N(2),N(7)-dimethyl 5'-triphosphoguanosine)-ribonucleoside in snoRNA + S-adenosyl-L-homocysteine + H(+). The enzyme catalyses a 5'-end (N(2),N(7)-dimethyl 5'-triphosphoguanosine)-ribonucleoside in snRNA + S-adenosyl-L-methionine = a 5'-end (N(2),N(2),N(7)-trimethyl 5'-triphosphoguanosine)-ribonucleoside in snRNA + S-adenosyl-L-homocysteine + H(+). The catalysed reaction is a 5'-end (N(2),N(7)-dimethyl 5'-triphosphoguanosine)-ribonucleoside in snoRNA + S-adenosyl-L-methionine = a 5'-end (N(2),N(2),N(7)-trimethyl 5'-triphosphoguanosine)-ribonucleoside in snoRNA + S-adenosyl-L-homocysteine + H(+). With respect to regulation, substrate inhibited by S-adenosyl-L-homocysteine. Functionally, catalyzes the two serial methylation steps for the conversion of the 7-monomethylguanosine (m(7)G) caps of snRNAs and snoRNAs to a 2,2,7-trimethylguanosine (m(2,2,7)G) cap structure. The enzyme is specific for guanine, and N7 methylation must precede N2 methylation. Hypermethylates the m3G cap on TLC1 telomerase which affects telomere silencing and telomere length regulation. Required for pre-mRNA splicing, pre-rRNA processing and small ribosomal subunit synthesis. Involved in nucleolar structural organization. This chain is Trimethylguanosine synthase (TGS1), found in Saccharomyces cerevisiae (strain ATCC 204508 / S288c) (Baker's yeast).